The chain runs to 711 residues: MVKLAKAGKNQGDPKKMAPPPKEVEEDSEDEEMSEDEEDDSSGEEVVIPQKKGKKAAATSAKKVVVSPTKKVAVATPAKKAAVTPGKKAAATPAKKTVTPAKAVATPGKKGATPGKALVATPGKKGAAIPAKGAKNGKNAKKEDSDEEEEDDSEEDDEDDEDEDEDEDEIEPAVMKAAAAAPASEDEDDEDDEDDEDEDDDDEEDDSEEEAMETTPAKGKKAAKVVPVKAKNVAEDEDEEEDDEDEDDDDDEDDEDEDDDDEDEEEEEEEEEPVKEAPGKRKKEMAKQKAAPEAKKQKVEGTEPTTAFNLFVGNLNFNKSAPELKTGISDVFAKNDLAVVDVRIGMTRKFGYVDFESAEDLEKALELTGLKVFGNEIKLEKPKGKDSKKERDARTLLAKNLPYKVTQDELKEVFEDAAEIRLVSKDGKSKGIAYIEFKTEADAEKTFEEKQGTEIDGRSISLYYTGEKGQNQDYRGGKNSTWSGESKTLVLSNLSYSATEETLQEVFEKATFIKVPQNQNGKSKGYAFIEFASFEDAKEALNSCNKREIEGRAIRLELQGPRGSPNARSQPSKTLFVKGLSEDTTEETLKESFDGSVRARIVTDRETGSSKGFGFVDFNSEEDAKAAKEAMEDGEIDGNKVTLDWAKPKGEGGFGGRGGGRGGFGGRGGGRGGRGGFGGRGRGGFGGRGGFRGGRGGGGDHKPQGKKTKFE.

The segment at 1–304 is disordered; that stretch reads MVKLAKAGKN…KKQKVEGTEP (304 aa). N6-acetyllysine occurs at positions 9, 15, and 16. The span at 24–43 shows a compositional bias: acidic residues; sequence VEEDSEDEEMSEDEEDDSSG. 4 positions are modified to phosphoserine: serine 28, serine 34, serine 41, and serine 42. A compositionally biased stretch (low complexity) spans 56–107; it reads AAATSAKKVVVSPTKKVAVATPAKKAAVTPGKKAAATPAKKTVTPAKAVATP. Residues 58 to 65 form repeat 1; sequence ATSAKKVV. The interval 58–135 is 8 X 8 AA tandem repeats of X-T-P-X-K-K-X-X; sequence ATSAKKVVVS…GAAIPAKGAK (78 aa). Serine 67 bears the Phosphoserine mark. Phosphothreonine is present on residues threonine 69, threonine 76, threonine 84, and threonine 92. 3 tandem repeats follow at residues 75–82, 83–90, and 91–98. Position 96 is an N6-acetyllysine (lysine 96). Position 99 is a phosphothreonine (threonine 99). The 5; truncated repeat unit spans residues 99-104; it reads TPAKAV. The residue at position 102 (lysine 102) is an N6-acetyllysine. Repeat unit 6 spans residues 105-112; sequence ATPGKKGA. The residue at position 106 (threonine 106) is a Phosphothreonine. At lysine 109 the chain carries N6-acetyllysine. Threonine 113 carries the post-translational modification Phosphothreonine. Lysine 116 carries the post-translational modification N6-acetyllysine. Repeat copies occupy residues 120–127 and 128–135. Phosphothreonine is present on threonine 121. The segment covering 122-137 has biased composition (low complexity); sequence PGKKGAAIPAKGAKNG. N6-acetyllysine is present on lysine 124. 4 positions are modified to phosphoserine: serine 145, serine 153, serine 184, and serine 207. Acidic residues-rich tracts occupy residues 145 to 171 and 184 to 212; these read SDEE…DEIE and SEDE…EEAM. Threonine 215 is modified (phosphothreonine). Residues 235–273 are compositionally biased toward acidic residues; sequence EDEDEEEDDEDEDDDDDEDDEDEDDDDEDEEEEEEEEEP. Over residues 274–301 the composition is skewed to basic and acidic residues; that stretch reads VKEAPGKRKKEMAKQKAAPEAKKQKVEG. Lysine 298 participates in a covalent cross-link: Glycyl lysine isopeptide (Lys-Gly) (interchain with G-Cter in SUMO1); alternate. Lysine 298 participates in a covalent cross-link: Glycyl lysine isopeptide (Lys-Gly) (interchain with G-Cter in SUMO2); alternate. Threonine 302 carries the phosphothreonine modification. RRM domains are found at residues 308-384 and 394-467; these read FNLF…KPKG and RTLL…YTGE. At lysine 319 the chain carries N6-acetyllysine. Lysine 325 is covalently cross-linked (Glycyl lysine isopeptide (Lys-Gly) (interchain with G-Cter in SUMO1); alternate). Residue lysine 325 forms a Glycyl lysine isopeptide (Lys-Gly) (interchain with G-Cter in SUMO2); alternate linkage. Lysine 349 is modified (N6-acetyllysine). At serine 357 the chain carries Phosphoserine. Threonine 368 is modified (phosphothreonine). Lysine 371 is covalently cross-linked (Glycyl lysine isopeptide (Lys-Gly) (interchain with G-Cter in SUMO2)). Lysine 378 participates in a covalent cross-link: Glycyl lysine isopeptide (Lys-Gly) (interchain with G-Cter in SUMO2); alternate. Lysine 378 bears the N6-acetyllysine; alternate mark. Lysine 399 and lysine 404 each carry N6-acetyllysine. Threonine 406 bears the Phosphothreonine mark. Lysine 428 and lysine 445 each carry N6-acetyllysine. 2 positions are modified to phosphoserine: serine 459 and serine 461. 2 positions are modified to N6-acetyllysine: lysine 468 and lysine 478. The RRM 3 domain maps to 487–561; the sequence is KTLVLSNLSY…RAIRLELQGP (75 aa). A Glycyl lysine isopeptide (Lys-Gly) (interchain with G-Cter in SUMO2); alternate cross-link involves residue lysine 514. The residue at position 514 (lysine 514) is an N6-acetyllysine; alternate. N6-acetyllysine is present on lysine 522. Residue serine 564 is modified to Phosphoserine. The residue at position 573 (lysine 573) is an N6-acetyllysine. Residues 573-648 form the RRM 4 domain; sequence KTLFVKGLSE…NKVTLDWAKP (76 aa). A Glycyl lysine isopeptide (Lys-Gly) (interchain with G-Cter in SUMO2); alternate cross-link involves residue lysine 578. The residue at position 578 (lysine 578) is an N6-acetyllysine; alternate. Position 581 is a phosphoserine (serine 581). A Glycyl lysine isopeptide (Lys-Gly) (interchain with G-Cter in SUMO1); alternate cross-link involves residue lysine 590. Lysine 590 is covalently cross-linked (Glycyl lysine isopeptide (Lys-Gly) (interchain with G-Cter in SUMO2); alternate). Phosphoserine is present on residues serine 592 and serine 620. A Glycyl lysine isopeptide (Lys-Gly) (interchain with G-Cter in SUMO2) cross-link involves residue lysine 625. The interval 641 to 711 is disordered; it reads VTLDWAKPKG…KPQGKKTKFE (71 aa). Position 647 is an N6-acetyllysine (lysine 647). A compositionally biased stretch (gly residues) spans 651–697; it reads EGGFGGRGGGRGGFGGRGGGRGGRGGFGGRGRGGFGGRGGFRGGRGG. Asymmetric dimethylarginine is present on residues arginine 657, arginine 661, arginine 667, arginine 671, arginine 674, arginine 680, arginine 682, arginine 688, and arginine 692. The residue at position 695 (arginine 695) is an Asymmetric dimethylarginine; alternate. Arginine 695 is subject to Omega-N-methylarginine; alternate. Over residues 698–711 the composition is skewed to basic and acidic residues; it reads GGDHKPQGKKTKFE.

In terms of assembly, identified in a IGF2BP1-dependent mRNP granule complex containing untranslated mRNAs. Component of the SWAP complex that consists of NPM1, NCL/nucleolin, PARP1 and SWAP70. Component of a complex which is at least composed of HTATSF1/Tat-SF1, the P-TEFb complex components CDK9 and CCNT1, RNA polymerase II, SUPT5H, and NCL/nucleolin. Interacts with AICDA. Interacts with APTX. Interacts with C1QBP. Interacts with ERBB4. Interacts (via C-terminus) with FMR1 isoform 6 (via N-terminus). Interacts with GZF1; this interaction is important for nucleolar localization of GZF1. Interacts with NSUN2. Interacts with NVL. Interacts (via N-terminus domain) with SETX. Interacts (via RRM1 and C-terminal RRM4/Arg/Gly-rich domains) with TERT; the interaction is important for nucleolar localization of TERT. Interacts with WDR46. Interacts with ZFP36. Interacts with LRRC34. Interacts with RRP1B. Interacts with HNRNPU; this interaction occurs during mitosis. Interacts with RIOK1; RIOK1 recruits NCL to PRMT5 for symmetrically methylation. Interacts with ZBTB7B. Interacts with MDK; this interaction promotes NCL clustering and lateral movements of this complex into lipid rafts leading to MDK internalization. Interacts with HDGF. Interacts with ALKBH2. Interacts with IGFBP5; this interaction is necessary for IGFBP5 localization to the nucleus. Some glutamate residues are glycylated by TTLL8. This modification occurs exclusively on glutamate residues and results in a glycine chain on the gamma-carboxyl group. In terms of processing, symmetrically methylated by PRMT5.

The protein resides in the nucleus. It localises to the nucleolus. It is found in the cytoplasm. In terms of biological role, nucleolin is the major nucleolar protein of growing eukaryotic cells. It is found associated with intranucleolar chromatin and pre-ribosomal particles. It induces chromatin decondensation by binding to histone H1. It is thought to play a role in pre-rRNA transcription and ribosome assembly. May play a role in the process of transcriptional elongation. Binds RNA oligonucleotides with 5'-UUAGGG-3' repeats more tightly than the telomeric single-stranded DNA 5'-TTAGGG-3' repeats. The sequence is that of Nucleolin (NCL) from Macaca fascicularis (Crab-eating macaque).